Here is a 102-residue protein sequence, read N- to C-terminus: A-type ATP synthase subunit F (102 aa).

This sequence belongs to the V-ATPase F subunit family. As to quaternary structure, has multiple subunits with at least A(3), B(3), C, D, E, F, H, I and proteolipid K(x).

The protein resides in the cell membrane. Functionally, component of the A-type ATP synthase that produces ATP from ADP in the presence of a proton gradient across the membrane. This chain is A-type ATP synthase subunit F, found in Thermococcus gammatolerans (strain DSM 15229 / JCM 11827 / EJ3).